The sequence spans 145 residues: Bacilliredoxin SAR1592 (145 aa).

The protein belongs to the bacilliredoxin family.

The polypeptide is Bacilliredoxin SAR1592 (Staphylococcus aureus (strain MRSA252)).